A 463-amino-acid chain; its full sequence is NADH-quinone oxidoreductase subunit N (463 aa).

Transmembrane regions (helical) follow at residues 2–22 (NTLIAITGLGIFCLLFEILNF), 25–45 (GIVPFTILGLLGVLALNFYEF), 61–81 (FSTAFSSLFIILTIFLVALSH), 91–110 (ISDFIAIKVFLLAGAVAMVS), 114–133 (LAMFFLGIEILSIALYVLAA), 149–169 (FLMGSFASGIILFGICLIYGA), 189–209 (IWFPIGMILMTIGMFFKIAAV), 223–243 (PALTTALMSTLAKVVAIATLF), 264–284 (FTNVILTISIASMTVGNIMAL), 292–312 (MLAFSGISHAGFMLMTFLTIA), 317–337 (VLLYYTAAYALAGIAAFSVIL), 362–382 (AAILTGSLLSMGGIPIFSGFF), 395–415 (GYVAIVIAAVINSIISVGYYF), and 434–454 (PFLIYAVAIISIGLNIALGLF).

This sequence belongs to the complex I subunit 2 family. As to quaternary structure, NDH-1 is composed of 14 different subunits. Subunits NuoA, H, J, K, L, M, N constitute the membrane sector of the complex.

Its subcellular location is the cell inner membrane. The catalysed reaction is a quinone + NADH + 5 H(+)(in) = a quinol + NAD(+) + 4 H(+)(out). Functionally, NDH-1 shuttles electrons from NADH, via FMN and iron-sulfur (Fe-S) centers, to quinones in the respiratory chain. The immediate electron acceptor for the enzyme in this species is believed to be a menaquinone. Couples the redox reaction to proton translocation (for every two electrons transferred, four hydrogen ions are translocated across the cytoplasmic membrane), and thus conserves the redox energy in a proton gradient. The protein is NADH-quinone oxidoreductase subunit N of Flavobacterium johnsoniae (strain ATCC 17061 / DSM 2064 / JCM 8514 / BCRC 14874 / CCUG 350202 / NBRC 14942 / NCIMB 11054 / UW101) (Cytophaga johnsonae).